The sequence spans 318 residues: Aspartate carbamoyltransferase catalytic subunit (318 aa).

Carbamoyl phosphate is bound by residues Arg-56 and Thr-57. Lys-84 provides a ligand contact to L-aspartate. Carbamoyl phosphate contacts are provided by Arg-106, His-143, and Gln-146. L-aspartate is bound by residues Arg-176 and Arg-230. 2 residues coordinate carbamoyl phosphate: Gly-271 and Pro-272.

This sequence belongs to the aspartate/ornithine carbamoyltransferase superfamily. ATCase family. In terms of assembly, heterododecamer (2C3:3R2) of six catalytic PyrB chains organized as two trimers (C3), and six regulatory PyrI chains organized as three dimers (R2).

The enzyme catalyses carbamoyl phosphate + L-aspartate = N-carbamoyl-L-aspartate + phosphate + H(+). The protein operates within pyrimidine metabolism; UMP biosynthesis via de novo pathway; (S)-dihydroorotate from bicarbonate: step 2/3. Catalyzes the condensation of carbamoyl phosphate and aspartate to form carbamoyl aspartate and inorganic phosphate, the committed step in the de novo pyrimidine nucleotide biosynthesis pathway. In Mycobacterium avium (strain 104), this protein is Aspartate carbamoyltransferase catalytic subunit.